Reading from the N-terminus, the 55-residue chain is Large ribosomal subunit protein bL33C (55 aa).

This sequence belongs to the bacterial ribosomal protein bL33 family.

In Kineococcus radiotolerans (strain ATCC BAA-149 / DSM 14245 / SRS30216), this protein is Large ribosomal subunit protein bL33C.